Here is a 547-residue protein sequence, read N- to C-terminus: Chaperonin GroEL (547 aa).

ATP-binding positions include 30-33 (TLGP), Lys51, 87-91 (DGTTT), Gly415, 479-481 (NAA), and Asp495.

This sequence belongs to the chaperonin (HSP60) family. Forms a cylinder of 14 subunits composed of two heptameric rings stacked back-to-back. Interacts with the co-chaperonin GroES.

The protein localises to the cytoplasm. The catalysed reaction is ATP + H2O + a folded polypeptide = ADP + phosphate + an unfolded polypeptide.. Together with its co-chaperonin GroES, plays an essential role in assisting protein folding. The GroEL-GroES system forms a nano-cage that allows encapsulation of the non-native substrate proteins and provides a physical environment optimized to promote and accelerate protein folding. The polypeptide is Chaperonin GroEL (Polynucleobacter necessarius subsp. necessarius (strain STIR1)).